We begin with the raw amino-acid sequence, 457 residues long: Arginine biosynthesis bifunctional protein ArgJ, mitochondrial (457 aa).

Substrate contacts are provided by threonine 184, lysine 213, threonine 224, glutamate 312, asparagine 452, and threonine 457. Threonine 224 serves as the catalytic Nucleophile.

This sequence belongs to the ArgJ family. As to quaternary structure, heterodimer of an alpha and a beta chain. The alpha and beta chains are autoproteolytically processed from a single precursor protein within the mitochondrion.

It localises to the mitochondrion matrix. The catalysed reaction is N(2)-acetyl-L-ornithine + L-glutamate = N-acetyl-L-glutamate + L-ornithine. It carries out the reaction L-glutamate + acetyl-CoA = N-acetyl-L-glutamate + CoA + H(+). Its pathway is amino-acid biosynthesis; L-arginine biosynthesis; L-ornithine and N-acetyl-L-glutamate from L-glutamate and N(2)-acetyl-L-ornithine (cyclic): step 1/1. The protein operates within amino-acid biosynthesis; L-arginine biosynthesis; N(2)-acetyl-L-ornithine from L-glutamate: step 1/4. In terms of biological role, catalyzes two activities which are involved in the cyclic version of arginine biosynthesis: the synthesis of acetylglutamate from glutamate and acetyl-CoA, and of ornithine by transacetylation between acetylornithine and glutamate. This chain is Arginine biosynthesis bifunctional protein ArgJ, mitochondrial, found in Aspergillus terreus (strain NIH 2624 / FGSC A1156).